Here is a 620-residue protein sequence, read N- to C-terminus: Glutathione-regulated potassium-efflux system protein KefC (620 aa).

A run of 12 helical transmembrane segments spans residues 4–24 (HTLV…PIAV), 26–46 (LGLG…LWGL), 54–74 (SILH…GLEL), 90–110 (GALQ…LLGL), 114–134 (VAEL…MQAM), 149–169 (FAVL…IPLL), 178–198 (MGAF…VVLL), 218–238 (VFSA…EEVG), 270–290 (GLLL…GTLI), 294–314 (LRIV…LWLI), 327–347 (WFAV…GAAQ), and 359–379 (SLTL…VILN). An RCK N-terminal domain is found at 399 to 518 (QPRVIIAGFG…AGVEKPERET (120 aa)). The tract at residues 597-620 (GWQGTEEGKHTGNMADEPETKPSS) is disordered.

It belongs to the monovalent cation:proton antiporter 2 (CPA2) transporter (TC 2.A.37) family. KefC subfamily. As to quaternary structure, homodimer. Interacts with the regulatory subunit KefF.

The protein localises to the cell inner membrane. In terms of biological role, pore-forming subunit of a potassium efflux system that confers protection against electrophiles. Catalyzes K(+)/H(+) antiport. The sequence is that of Glutathione-regulated potassium-efflux system protein KefC from Shigella flexneri serotype 5b (strain 8401).